We begin with the raw amino-acid sequence, 393 residues long: Proteasome-activating nucleotidase (393 aa).

A coiled-coil region spans residues 14 to 53 (SDEVQLVRLLEEKIKSLQIEIENLRKELNYYKAEMEKMLS). Residues 178 to 183 (GTGKTM) and tyrosine 317 contribute to the ATP site. A docks into pockets in the proteasome alpha-ring to cause gate opening region spans residues 391 to 393 (KYS).

Belongs to the AAA ATPase family. Homohexamer. The hexameric complex has a two-ring architecture resembling a top hat that caps the 20S proteasome core at one or both ends. Upon ATP-binding, the C-terminus of PAN interacts with the alpha-rings of the proteasome core by binding to the intersubunit pockets.

It localises to the cytoplasm. In terms of biological role, ATPase which is responsible for recognizing, binding, unfolding and translocation of substrate proteins into the archaeal 20S proteasome core particle. Is essential for opening the gate of the 20S proteasome via an interaction with its C-terminus, thereby allowing substrate entry and access to the site of proteolysis. Thus, the C-termini of the proteasomal ATPase function like a 'key in a lock' to induce gate opening and therefore regulate proteolysis. Unfolding activity requires energy from ATP hydrolysis, whereas ATP binding alone promotes ATPase-20S proteasome association which triggers gate opening, and supports translocation of unfolded substrates. The protein is Proteasome-activating nucleotidase of Saccharolobus islandicus (strain M.16.27) (Sulfolobus islandicus).